The primary structure comprises 623 residues: Sterol O-acyltransferase 1 (623 aa).

The disordered stretch occupies residues 20-99 (NSAEPSKRHS…EQAEEKYPVD (80 aa)). Residues 57 to 72 (ATTTATGVAVAAAAAA) show a composition bias toward low complexity. The span at 83 to 92 (DGDDEQDEQA) shows a compositional bias: acidic residues. 5 helical membrane-spanning segments follow: residues 195–215 (LESN…WIAF), 242–262 (LFTI…VVFV), 277–297 (GFVA…PVYV), 384–404 (ISCS…QINY), and 422–442 (IMGT…PVAM). An FYXDWWN motif motif is present at residues 504–510 (FYGDWWN). Helical transmembrane passes span 548–568 (ATLF…FAIF) and 603–623 (VVFT…YLTL). H560 is a catalytic residue.

Belongs to the membrane-bound acyltransferase family. Sterol o-acyltransferase subfamily.

The protein resides in the endoplasmic reticulum membrane. In terms of biological role, sterol O-acyltransferase that catalyzes the formation of stery esters. This Saccharomyces uvarum (strain ATCC 76518 / CBS 7001 / CLIB 283 / NBRC 10550 / MCYC 623 / NCYC 2669 / NRRL Y-11845) (Yeast) protein is Sterol O-acyltransferase 1 (ARE1).